The following is a 169-amino-acid chain: UPF0303 protein BMEI0598 (169 aa).

This sequence belongs to the UPF0303 family.

The sequence is that of UPF0303 protein BMEI0598 from Brucella melitensis biotype 1 (strain ATCC 23456 / CCUG 17765 / NCTC 10094 / 16M).